A 257-amino-acid polypeptide reads, in one-letter code: Short-chain dehydrogenase reductase 3b (257 aa).

An NAD(+)-binding site is contributed by I12–V36. S144 contacts substrate. The active-site Proton acceptor is Y157.

This sequence belongs to the short-chain dehydrogenases/reductases (SDR) family.

The protein is Short-chain dehydrogenase reductase 3b (SDR3b) of Arabidopsis thaliana (Mouse-ear cress).